The primary structure comprises 174 residues: Pectinesterase inhibitor 12 (174 aa).

The first 20 residues, 1–20 (MKFLVSLVIFSLFLNGFATA), serve as a signal peptide directing secretion. 2 disulfides stabilise this stretch: cysteine 28–cysteine 43 and cysteine 100–cysteine 140. Asparagine 129 is a glycosylation site (N-linked (GlcNAc...) asparagine).

It belongs to the PMEI family.

It localises to the secreted. The protein localises to the extracellular space. Its subcellular location is the apoplast. In terms of biological role, pectin methylesterase (PME) inhibitor involved in the maintenance of cell wall integrity in response to necrotrophic pathogens. Modulates PME activity and pectin methylesterification during infection by Botrytis cinerea and contributes to resistance against the pathogen. This Arabidopsis thaliana (Mouse-ear cress) protein is Pectinesterase inhibitor 12.